A 308-amino-acid chain; its full sequence is Bacitracin transport ATP-binding protein BcrA (308 aa).

Positions 8–236 (IETENLTKQY…NRKYTEFDVS (229 aa)) constitute an ABC transporter domain. 40-47 (GRNGAGKT) contacts ATP.

The protein belongs to the ABC transporter superfamily. In terms of assembly, the complex is probably composed of two ATP-binding proteins (BcrA) and two transmembrane proteins (BcrB).

Functionally, essential for high-level bacitracin resistance. Part of the ABC transporter complex BcrAB. Probably responsible for energy coupling to the transport system. This chain is Bacitracin transport ATP-binding protein BcrA, found in Enterococcus faecalis (Streptococcus faecalis).